The sequence spans 171 residues: Protein phosphatase 1 regulatory subunit 1A (171 aa).

Residue Met1 is modified to N-acetylmethionine. Residues Met1–Val171 form a disordered region. Residues Lys9–Phe12 are essential for activity. Residues Pro19–Ile29 are compositionally biased toward basic and acidic residues. Thr35 is modified (phosphothreonine; by PKA). The interval Thr42 to Arg54 is essential for activity. Residues Ser43, Ser46, Ser47, and Ser67 each carry the phosphoserine modification. Basic and acidic residues predominate over residues Lys135 to Ser157. Positions Thr143–Val171 are interaction with PPP1R15A.

Belongs to the protein phosphatase inhibitor 1 family. As to quaternary structure, interacts with PPP1R15A. In terms of processing, phosphorylation of Thr-35 is required for activity.

Its function is as follows. Inhibitor of protein-phosphatase 1. This protein may be important in hormonal control of glycogen metabolism. Hormones that elevate intracellular cAMP increase I-1 activity in many tissues. I-1 activation may impose cAMP control over proteins that are not directly phosphorylated by PKA. Following a rise in intracellular calcium, I-1 is inactivated by calcineurin (or PP2B). Does not inhibit type-2 phosphatases. This Homo sapiens (Human) protein is Protein phosphatase 1 regulatory subunit 1A (PPP1R1A).